The sequence spans 442 residues: Mitochondrial distribution and morphology protein 12 (442 aa).

An SMP-LTD domain is found at 1 to 442 (MSIDINWEAA…VYPSFWTFLV (442 aa)). 3 disordered regions span residues 67–125 (NDFY…RVGY), 202–277 (LSLA…RRMR), and 364–387 (EGYH…RRSN). Positions 69 to 80 (FYEEDEDGEDLS) are enriched in acidic residues. The span at 90 to 100 (PSSQGLSQSTP) shows a compositional bias: polar residues. Residues 101–112 (NGDAGSSNSSSN) show a composition bias toward low complexity. Positions 213–222 (RQRERARSSD) are enriched in basic and acidic residues. The span at 227–245 (SPQSRSRPSTSSTRQRTST) shows a compositional bias: low complexity.

It belongs to the MDM12 family. As to quaternary structure, component of the ER-mitochondria encounter structure (ERMES) or MDM complex, composed of MMM1, MDM10, MDM12 and MDM34. An MMM1 homodimer associates with one molecule of MDM12 on each side in a pairwise head-to-tail manner, and the SMP-LTD domains of MMM1 and MDM12 generate a continuous hydrophobic tunnel for phospholipid trafficking.

The protein resides in the mitochondrion outer membrane. It localises to the endoplasmic reticulum membrane. Functionally, component of the ERMES/MDM complex, which serves as a molecular tether to connect the endoplasmic reticulum (ER) and mitochondria. Components of this complex are involved in the control of mitochondrial shape and protein biogenesis, and function in nonvesicular lipid trafficking between the ER and mitochondria. MDM12 is required for the interaction of the ER-resident membrane protein MMM1 and the outer mitochondrial membrane-resident beta-barrel protein MDM10. The MDM12-MMM1 subcomplex functions in the major beta-barrel assembly pathway that is responsible for biogenesis of all mitochondrial outer membrane beta-barrel proteins, and acts in a late step after the SAM complex. The MDM10-MDM12-MMM1 subcomplex further acts in the TOM40-specific pathway after the action of the MDM12-MMM1 complex. Essential for establishing and maintaining the structure of mitochondria and maintenance of mtDNA nucleoids. The sequence is that of Mitochondrial distribution and morphology protein 12 from Arthroderma otae (strain ATCC MYA-4605 / CBS 113480) (Microsporum canis).